A 687-amino-acid chain; its full sequence is A-kinase anchor protein 8 (687 aa).

Residues 1 to 195 form an interaction with MCM2 region; sequence MEQGYGGYGA…FLRGRGQGRF (195 aa). The interaction with DPY30 stretch occupies residues 1–210; that stretch reads MEQGYGGYGA…SSTFIRSDPF (210 aa). Position 72 is a phosphoserine (serine 72). Disordered regions lie at residues 105–124 and 185–218; these read KEGG…DRDS and GFLR…ASEP. Asymmetric dimethylarginine; alternate is present on arginine 109. Omega-N-methylarginine; alternate is present on arginine 109. Residues 109 to 118 show a composition bias toward gly residues; it reads RGGISSGGEG. The interaction with DDX5 stretch occupies residues 109 to 201; it reads RGGISSGGEG…QGRFQDRSNS (93 aa). Serine 199 is modified (phosphoserine). An omega-N-methylarginine mark is found at arginine 232 and arginine 276. Positions 277–379 are disordered; that stretch reads SQTRIRDWPR…KQRRRDRMRD (103 aa). 2 stretches are compositionally biased toward basic and acidic residues: residues 280 to 294 and 311 to 320; these read RIRD…ERFG and PDAKLARADS. Residues 286-303 carry the Bipartite nuclear localization signal motif; that stretch reads RRRGFERFGPDNMGRKRK. Lysine 314 participates in a covalent cross-link: Glycyl lysine isopeptide (Lys-Gly) (interchain with G-Cter in SUMO2). Phosphoserine occurs at positions 320, 325, and 336. Residues 321–331 show a composition bias toward acidic residues; it reads DGDLSENDDGA. Residues 335 to 357 are compositionally biased toward basic and acidic residues; it reads RSGDEEFRGEDDLCDSRKQRGEK. Residues 384–447 are involved in chromatin-binding; that stretch reads RIQFACSVCK…NKKIEKRRQE (64 aa). 2 C2H2 AKAP95-type zinc fingers span residues 389-411 and 478-501; these read CSVC…SKFH and CLAC…SVDH. Residues 522–565 are involved in condensin complex recruitment; the sequence is SVLNNKHIVKMLEKYLKGEDPFVNETADLETEGDENVGEEKEET. Phosphothreonine is present on threonine 552. Residues 568–585 are RII-binding; sequence EVAAEVLAEVITAAVKAV. The segment at 572–589 is required for interaction with MYCBP; that stretch reads EVLAEVITAAVKAVEGEG. The interval 624–659 is disordered; sequence QTCEAASETRSIEDKTRGEAAEARNEAAMPTADAGS. The span at 633 to 648 shows a compositional bias: basic and acidic residues; that stretch reads RSIEDKTRGEAAEARN. Serine 659 bears the Phosphoserine mark.

It belongs to the AKAP95 family. As to quaternary structure, binds to the PKA RII-alpha regulatory subunit PRKAR2A. Interacts (via C-terminus) with FIGN. Interacts with NCAPD2, CCND3, CCNE1, MCM2, RPS6KA1, DDX5, PDE4A. Interacts with MYCBP; MYCBP is translocated to the nucleus and the interaction prevents the association of the PKA catalytic subunit leading to suppression of PKA activity. Interacts with CCND1, CASP3. Interacts with NFKB1; detetcted in the cytoplasm. Interacts with DPY30; mediating AKAP8 association with at least the MLL4/WBP7 HMT complex. Interacts with HDAC3; increased during mitosis. Interacts with GJA1; in the nucleus and in the nuclear membrane; the nuclear association increases with progress of cell cycle G1, S and G2 phase and decreases in M phase. Phosphorylated on tyrosine residues probably by SRC subfamily protein kinases; multiple phosphorylation is leading to dissociation from nuclear structures implicated in chromatin structural changes.

The protein resides in the nucleus matrix. Its subcellular location is the nucleus. The protein localises to the nucleolus. It localises to the cytoplasm. Its function is as follows. Anchoring protein that mediates the subcellular compartmentation of cAMP-dependent protein kinase (PKA type II). Acts as an anchor for a PKA-signaling complex onto mitotic chromosomes, which is required for maintenance of chromosomes in a condensed form throughout mitosis. Recruits condensin complex subunit NCAPD2 to chromosomes required for chromatin condensation; the function appears to be independent from PKA-anchoring. Specifically involved in recruitment of CAPD2 to, and condensation of maternal but not paternal chromosomes. May help to deliver cyclin D/E to CDK4 to facilitate cell cycle progression. Required for cell cycle G2/M transition and histone deacetylation during mitosis. In mitotic cells recruits HDAC3 to the vicinity of chromatin leading to deacetylation and subsequent phosphorylation at 'Ser-10' of histone H3; in this function may act redundantly with AKAP8L. Involved in nuclear retention of RPS6KA1 upon ERK activation thus inducing cell proliferation. May be involved in regulation of DNA replication by acting as scaffold for MCM2. Enhances HMT activity of the KMT2 family MLL4/WBP7 complex and is involved in transcriptional regulation. In a teratocarcinoma cell line is involved in retinoic acid-mediated induction of developmental genes implicating H3 'Lys-4' methylation. May be involved in recruitment of active CASP3 to the nucleus in apoptotic cells. May act as a carrier protein of GJA1 for its transport to the nucleus. May play a repressive role in the regulation of rDNA transcription. Preferentially binds GC-rich DNA in vitro. In cells, associates with ribosomal RNA (rRNA) chromatin, preferentially with rRNA promoter and transcribed regions. Involved in modulation of Toll-like receptor signaling. Required for the cAMP-dependent suppression of TNF-alpha in early stages of LPS-induced macrophage activation; the function probably implicates targeting of PKA to NFKB1. This Mus musculus (Mouse) protein is A-kinase anchor protein 8 (Akap8).